The primary structure comprises 352 residues: Chorismate synthase (352 aa).

An NADP(+)-binding site is contributed by R48. FMN is bound by residues 125 to 127, 237 to 238, G278, 293 to 297, and R319; these read RSS, NA, and KPTSS.

This sequence belongs to the chorismate synthase family. As to quaternary structure, homotetramer. Requires FMNH2 as cofactor.

It catalyses the reaction 5-O-(1-carboxyvinyl)-3-phosphoshikimate = chorismate + phosphate. The protein operates within metabolic intermediate biosynthesis; chorismate biosynthesis; chorismate from D-erythrose 4-phosphate and phosphoenolpyruvate: step 7/7. In terms of biological role, catalyzes the anti-1,4-elimination of the C-3 phosphate and the C-6 proR hydrogen from 5-enolpyruvylshikimate-3-phosphate (EPSP) to yield chorismate, which is the branch point compound that serves as the starting substrate for the three terminal pathways of aromatic amino acid biosynthesis. This reaction introduces a second double bond into the aromatic ring system. In Francisella tularensis subsp. holarctica (strain FTNF002-00 / FTA), this protein is Chorismate synthase.